We begin with the raw amino-acid sequence, 501 residues long: ADP,ATP carrier protein 3 (501 aa).

12 helical membrane passes run 23-43, 59-79, 90-110, 146-166, 183-203, 227-247, 293-313, 326-346, 361-381, 383-403, 446-466, and 470-490; these read LKLF…FGAL, IISF…TVLY, YIFY…AYII, YALM…LMFW, PVLG…LVFF, IILQ…MFLF, IALL…PWKA, VNFM…FMII, LLTP…IIFI, EIGT…VGAI, FGKS…PTAT, and IIIY…WNII.

This sequence belongs to the ADP/ATP translocase tlc family.

The protein resides in the cell membrane. Its function is as follows. Provides the rickettsial cell with host ATP in exchange for rickettsial ADP. This is an obligate exchange system. This energy acquiring activity is an important component of rickettsial parasitism. The protein is ADP,ATP carrier protein 3 (tlcC) of Rickettsia typhi (strain ATCC VR-144 / Wilmington).